The primary structure comprises 66 residues: Large ribosomal subunit protein uL29 (66 aa).

This sequence belongs to the universal ribosomal protein uL29 family.

The chain is Large ribosomal subunit protein uL29 from Caldanaerobacter subterraneus subsp. tengcongensis (strain DSM 15242 / JCM 11007 / NBRC 100824 / MB4) (Thermoanaerobacter tengcongensis).